Reading from the N-terminus, the 286-residue chain is Putative sugar uptake protein lmo0176 (286 aa).

Helical transmembrane passes span 4–26 (MIALIPALLWGTVPLIITKFGGS), 33–55 (GMTLGALTFAVIVFFFTDPVYTL), 114–136 (LRIILGFIALALIVGGIFLTSYA), 149–167 (GLITLFISACGYVGLVVLI), 177–194 (AILPQAIGMVISALIMTH), 207–226 (LLLTIPGVIWAAGNVAMVHA), 230–252 (VGVATGFSLSQLGVVISTIGGII), and 264–283 (LFVIVGVVLVVLGGILIGVA).

Belongs to the GRP transporter (TC 2.A.7.5) family.

It localises to the cell membrane. The chain is Putative sugar uptake protein lmo0176 from Listeria monocytogenes serovar 1/2a (strain ATCC BAA-679 / EGD-e).